The following is a 134-amino-acid chain: ATP synthase epsilon chain (134 aa).

It belongs to the ATPase epsilon chain family. F-type ATPases have 2 components, CF(1) - the catalytic core - and CF(0) - the membrane proton channel. CF(1) has five subunits: alpha(3), beta(3), gamma(1), delta(1), epsilon(1). CF(0) has three main subunits: a, b and c.

The protein resides in the cell inner membrane. Its function is as follows. Produces ATP from ADP in the presence of a proton gradient across the membrane. The protein is ATP synthase epsilon chain of Rhizobium meliloti (strain 1021) (Ensifer meliloti).